The primary structure comprises 342 residues: Methionine import ATP-binding protein MetN 2 (342 aa).

The 240-residue stretch at 2–241 (ISIEGLSKVF…PKQLVTRKFV (240 aa)) folds into the ABC transporter domain. Residue 38–45 (GYSGAGKS) participates in ATP binding.

It belongs to the ABC transporter superfamily. Methionine importer (TC 3.A.1.24) family. The complex is composed of two ATP-binding proteins (MetN), two transmembrane proteins (MetI) and a solute-binding protein (MetQ).

The protein resides in the cell membrane. The enzyme catalyses L-methionine(out) + ATP + H2O = L-methionine(in) + ADP + phosphate + H(+). It carries out the reaction D-methionine(out) + ATP + H2O = D-methionine(in) + ADP + phosphate + H(+). Its function is as follows. Part of the ABC transporter complex MetNIQ involved in methionine import. Responsible for energy coupling to the transport system. This is Methionine import ATP-binding protein MetN 2 from Oceanobacillus iheyensis (strain DSM 14371 / CIP 107618 / JCM 11309 / KCTC 3954 / HTE831).